The sequence spans 932 residues: Protein hir1 (932 aa).

WD repeat units lie at residues 16-55 (GHRLSIFSIHIHPDGSRIATGGLDGTIRIWSTEAINRENE), 72-111 (THTGTVTSVRFSPNGQYLASGSDDRVVIIWHKEEAIPGLG), 132-171 (GHDNDIQDLCWSYDSQLVVSVGLDSSIIVWNGTTFERLKR), 174-213 (AHQSHVKGITFDPAGKYFATESDDRTIKVWRVSDFSIEKT), 222-265 (PLST…SEIN), 268-316 (GHEG…PLLS), and 320-361 (VFQK…DMVS). 2 stretches are compositionally biased toward polar residues: residues 405-426 (STTDPTLVPQSSSTPKSAQKTP) and 441-453 (TVDTNKLTASKEQ). Disordered stretches follow at residues 405–470 (STTD…NEIP) and 498–520 (TPSTSRLASTQLQHTGSSQLPPQ). The segment covering 498–507 (TPSTSRLAST) has biased composition (low complexity).

The protein belongs to the WD repeat HIR1 family. Interacts with his3 and slm9.

The protein resides in the cytoplasm. It localises to the nucleus. Its function is as follows. Probably required for replication-independent chromatin assembly. Required for transcriptional silencing in the outer repeat (otr) centromeric repeats and the Tf2 long terminal repeat retrotransposons. Repressor of histone gene transcription in G1 arrested cells. Required for repression of htb1 gene expression outside of S phase. The sequence is that of Protein hir1 (hip1) from Schizosaccharomyces pombe (strain 972 / ATCC 24843) (Fission yeast).